The chain runs to 793 residues: Serine/threonine-protein phosphatase BSU1 (793 aa).

Kelch repeat units follow at residues 53 to 109, 110 to 160, 214 to 262, 264 to 314, and 329 to 388; these read STTA…LYGT, LILI…IAAQ, IFLL…VFGG, KLHV…NQYQ, and HLYV…EASS. Serine 395 and serine 444 each carry phosphoserine. The Mn(2+) site is built by aspartate 510, histidine 512, aspartate 544, and asparagine 576. Histidine 577 (proton donor) is an active-site residue. Mn(2+) contacts are provided by histidine 629 and histidine 707. Position 764 is a phosphoserine (serine 764).

Belongs to the PPP phosphatase family. BSU subfamily. As to quaternary structure, interacts with CDG1, CDL1 and ASK7/BIN2. Mn(2+) serves as cofactor. In terms of processing, phosphorylated at Ser-395 and Ser-444. Phosphorylated at Ser-764 by CDG1 and CDL1. As to expression, mainly expressed in young, elongating tissues. In young seedlings, it is expressed at the base of the hypocotyl, at the tip and most peripheral cell layers of cotyledons, and in the vascular cylinder of roots, particularly in the elongation zone and at the point of emergence of lateral roots. In mature plants, it is still present in the root vasculature, but almost completely absent in fully expanded stems and leaves. In flowers, it is mainly expressed in sepal veins, anther filaments, and in the style, suggesting that BSU1 is expressed in actively growing regions and apparently enriched in vascular tissues.

It is found in the nucleus. The catalysed reaction is O-phospho-L-seryl-[protein] + H2O = L-seryl-[protein] + phosphate. It carries out the reaction O-phospho-L-threonyl-[protein] + H2O = L-threonyl-[protein] + phosphate. With respect to regulation, activated by phosphorylation at Ser-764 by CDG1. In terms of biological role, phosphatase that acts as a positive regulator of brassinosteroid (BR) signaling. Dephosphorylates BES1, a transcription factor that regulates the expression of BR-response genes, thereby playing an important role in the regulation of response to BRs. Inactivates the negative regulator of BR signaling ASK7/BIN2 by dephosphorylation at 'Tyr-200'. In Arabidopsis thaliana (Mouse-ear cress), this protein is Serine/threonine-protein phosphatase BSU1 (BSU1).